The primary structure comprises 794 residues: Zinc finger protein 148 (794 aa).

Residue Lys6 forms a Glycyl lysine isopeptide (Lys-Gly) (interchain with G-Cter in SUMO2) linkage. Ser51 is modified (phosphoserine). Residues Lys88, Lys115, and Lys132 each participate in a glycyl lysine isopeptide (Lys-Gly) (interchain with G-Cter in SUMO2) cross-link. A C2H2-type 1 zinc finger spans residues 171-193; the sequence is HVCEHCNAAFRTNYHLQRHVFIH. At Thr194 the chain carries Phosphothreonine. C2H2-type zinc fingers lie at residues 199–221 and 227–249; these read FQCS…EKIH and FRCD…KRTH. Ser250 is modified (phosphoserine). The C2H2-type 4 zinc finger occupies 255–278; sequence YQCEYCLQYFSRTDRVLKHKRMCH. A Glycyl lysine isopeptide (Lys-Gly) (interchain with G-Cter in SUMO2) cross-link involves residue Lys291. Residues 298–346 are disordered; the sequence is EEDSGFSTSPKDNSLPKKKRQKPEKKSSGMDKESVLDKSDTKKDRNDYL. Phosphoserine is present on residues Ser301 and Ser306. A Glycyl lysine isopeptide (Lys-Gly) (interchain with G-Cter in SUMO2) cross-link involves residue Lys308. The span at 321–344 shows a compositional bias: basic and acidic residues; sequence EKKSSGMDKESVLDKSDTKKDRND. A Glycyl lysine isopeptide (Lys-Gly) (interchain with G-Cter in SUMO1); alternate cross-link involves residue Lys356. Residue Lys356 forms a Glycyl lysine isopeptide (Lys-Gly) (interchain with G-Cter in SUMO2); alternate linkage. Lys402 participates in a covalent cross-link: Glycyl lysine isopeptide (Lys-Gly) (interchain with G-Cter in SUMO2). Residue Ser412 is modified to Phosphoserine. Glycyl lysine isopeptide (Lys-Gly) (interchain with G-Cter in SUMO2) cross-links involve residues Lys421 and Lys424. A compositionally biased stretch (polar residues) spans 574-588; the sequence is NSSDVPEVTQSENVG. A disordered region spans residues 574–596; it reads NSSDVPEVTQSENVGSSSQASSS. Lys607 is modified (N6-acetyllysine). Ser665 and Ser784 each carry phosphoserine.

Belongs to the krueppel C2H2-type zinc-finger protein family. In terms of assembly, interacts with HNRNPDL. Interacts with the 5FMC complex; the interaction requires association with CHTOP. Interacts with CAVIN1. Post-translationally, sumoylated with SUMO2. Desumoylated by SENP3, resulting in the stimulation of transcription of its target genes. As to expression, expressed in heart, lung, kidney, skeletal muscle, liver, brain and spleen.

It localises to the nucleus. Functionally, involved in transcriptional regulation. Represses the transcription of a number of genes including gastrin, stromelysin and enolase. Binds to the G-rich box in the enhancer region of these genes. The sequence is that of Zinc finger protein 148 (Znf148) from Rattus norvegicus (Rat).